The primary structure comprises 470 residues: Flavin-containing monooxygenase FMO GS-OX-like 6 (470 aa).

G17–G22 contacts FAD. NADP(+) is bound at residue G214–G219.

The protein belongs to the FMO family. FAD is required as a cofactor.

Catalyzes the conversion of methylthioalkyl glucosinolates of any chain length into methylsulfinylalkyl glucosinolates. The chain is Flavin-containing monooxygenase FMO GS-OX-like 6 from Arabidopsis thaliana (Mouse-ear cress).